Here is a 403-residue protein sequence, read N- to C-terminus: MLTQKTKDIVKATAPVLAEHGYDIIKCFYQRMFEAHPELKNVFNMAHQEQGQQQQALARAVYAYAENIEDPNSLMAVLKNIANKHASLGVKPEQYPIVGEHLLAAIKEVLGNAATDDIISAWAQAYGNLADVLMGMESELYERSAEQPGGWKGWRTFVIREKRPESDVITSFILEPADGGPVVNFEPGQYTSVAIDVPALGLQQIRQYSLSDMPNGRSYRISVKREGGGPQPPGYVSNLLHDHVNVGDQVKLAAPYGSFHIDVDAKTPIVLISGGVGLTPMVSMLKVALQAPPRQVVFVHGARNSAVHAMRDRLREAAKTYENLDLFVFYDQPLPEDVQGRDYDYPGLVDVKQIEKSILLPDADYYICGPIPFMRMQHDALKNLGIHEARIHYEVFGPDLFAE.

A Globin domain is found at 1–138; that stretch reads MLTQKTKDIV…LADVLMGMES (138 aa). Histidine 85 lines the heme b pocket. Active-site charge relay system residues include tyrosine 95 and glutamate 137. The reductase stretch occupies residues 149–403; that stretch reads GGWKGWRTFV…EVFGPDLFAE (255 aa). Residues 152-262 enclose the FAD-binding FR-type domain; the sequence is KGWRTFVIRE…AAPYGSFHID (111 aa). FAD is bound by residues tyrosine 190 and 206-209; that span reads RQYS. Position 275–280 (275–280) interacts with NADP(+); sequence GVGLTP. Residue 395–398 participates in FAD binding; that stretch reads VFGP.

The protein belongs to the globin family. Two-domain flavohemoproteins subfamily. It in the C-terminal section; belongs to the flavoprotein pyridine nucleotide cytochrome reductase family. As to quaternary structure, monomer. The cofactor is FAD. Heme b serves as cofactor.

The protein resides in the cytoplasm. It carries out the reaction 2 nitric oxide + NADPH + 2 O2 = 2 nitrate + NADP(+) + H(+). It catalyses the reaction 2 nitric oxide + NADH + 2 O2 = 2 nitrate + NAD(+) + H(+). Its function is as follows. Is involved in NO detoxification in an aerobic process, termed nitric oxide dioxygenase (NOD) reaction that utilizes O(2) and NAD(P)H to convert NO to nitrate, which protects the bacterium from various noxious nitrogen compounds. Therefore, plays a central role in the inducible response to nitrosative stress. Functionally, in the presence of oxygen and NADH, FHP has NADH oxidase activity, which leads to the generation of superoxide and H(2)O(2), both in vitro and in vivo, and it has been suggested that FHP might act as an amplifier of superoxide stress. Under anaerobic conditions, FHP also exhibits nitric oxide reductase and FAD reductase activities. However, all these reactions are much lower than NOD activity. The chain is Flavohemoprotein (hmp) from Cupriavidus necator (strain ATCC 17699 / DSM 428 / KCTC 22496 / NCIMB 10442 / H16 / Stanier 337) (Ralstonia eutropha).